The following is a 208-amino-acid chain: Small ribosomal subunit protein uS4 (208 aa).

The region spanning 98-159 is the S4 RNA-binding domain; that stretch reads RRLDNVIYRL…KSRTVAVITN (62 aa).

This sequence belongs to the universal ribosomal protein uS4 family. In terms of assembly, part of the 30S ribosomal subunit. Contacts protein S5. The interaction surface between S4 and S5 is involved in control of translational fidelity.

Its function is as follows. One of the primary rRNA binding proteins, it binds directly to 16S rRNA where it nucleates assembly of the body of the 30S subunit. Functionally, with S5 and S12 plays an important role in translational accuracy. This Desulfatibacillum aliphaticivorans protein is Small ribosomal subunit protein uS4.